The chain runs to 529 residues: MKALFAAITMAHALLQTQASLQNPNLLPTPPMGFNNWARFMCDLNETLFVETADAMAANGLLAAGYNWLNLDDCWMTHQRAPNNSLMWNTTKFPRGLPWLGSYVKAKGFRFGIYEDAGNLTCGGYPGSLGHEELDARTFADWGVEYLKLDGCNVFPEGGRTSEQQYEHLYGLWHRILSGMPHPLVFSESAPAYFANEKNLSDWYTVMDWVPRYGELARHSTDILVYAGEGSAWDSIMVNYRYNTLVARYQRPGYYNDPDFLIPDHPGLTMDEKKSHFGLWASFAAPLIISAYIPGLSEEDIGYLTNRDLIAVDQDPLAQQATLASRDDEVDVLTRSLADGSRLVSVLNRGNSSVQRVIPLQWLGLNPGQRYQARNLWDGTEKRIRKDLTVTVRSHATEIYKFTGSNGRVDAVSTGIVFNTASGNCLTGDAAGVGFAPCTGGEKQIWQVRGSELRPLSLLGECLTADGTRLSLRPCAGDEAQMWSYHISGNLKSGHEGGCLTEGHGVASCGWELNSQVFGLPSGVRVSGY.

Positions 1–19 are cleaved as a signal peptide; it reads MKALFAAITMAHALLQTQA. A disulfide bridge connects residues Cys-42 and Cys-74. N-linked (GlcNAc...) asparagine glycosylation is found at Asn-45, Asn-83, Asn-89, and Asn-119. Cysteines 122 and 152 form a disulfide. Asp-150 (nucleophile) is an active-site residue. Asn-199 is a glycosylation site (N-linked (GlcNAc...) asparagine). Asp-208 acts as the Proton donor in catalysis. Asn-351 is a glycosylation site (N-linked (GlcNAc...) asparagine). Positions 408 to 528 constitute a Ricin B-type lectin domain; sequence RVDAVSTGIV…GLPSGVRVSG (121 aa). Cystine bridges form between Cys-425/Cys-438 and Cys-462/Cys-475.

It belongs to the glycosyl hydrolase 27 family.

It is found in the secreted. The catalysed reaction is Hydrolysis of terminal, non-reducing alpha-D-galactose residues in alpha-D-galactosides, including galactose oligosaccharides, galactomannans and galactolipids.. Functionally, hydrolyzes a variety of simple alpha-D-galactoside as well as more complex molecules such as oligosaccharides and polysaccharides. The chain is Probable alpha-galactosidase A (aglA) from Aspergillus terreus (strain NIH 2624 / FGSC A1156).